The sequence spans 452 residues: Cysteine--tRNA ligase (452 aa).

A Zn(2+)-binding site is contributed by Cys-35. Positions 37 to 47 (PTVYDRAHLGN) match the 'HIGH' region motif. Cys-215, His-240, and Glu-244 together coordinate Zn(2+). Positions 273-277 (KMSKS) match the 'KMSKS' region motif. Lys-276 is an ATP binding site.

Belongs to the class-I aminoacyl-tRNA synthetase family. Monomer. Zn(2+) serves as cofactor.

The protein resides in the cytoplasm. The catalysed reaction is tRNA(Cys) + L-cysteine + ATP = L-cysteinyl-tRNA(Cys) + AMP + diphosphate. The sequence is that of Cysteine--tRNA ligase from Gluconobacter oxydans (strain 621H) (Gluconobacter suboxydans).